Here is a 372-residue protein sequence, read N- to C-terminus: tRNA-specific 2-thiouridylase MnmA (372 aa).

ATP is bound by residues 17-24 (GMSGGVDS) and M43. The interaction with target base in tRNA stretch occupies residues 103 to 105 (NPD). Catalysis depends on C108, which acts as the Nucleophile. A disulfide bridge connects residues C108 and C205. G133 contacts ATP. Residues 155–157 (KDQ) are interaction with tRNA. C205 serves as the catalytic Cysteine persulfide intermediate. The tract at residues 317–318 (RY) is interaction with tRNA.

The protein belongs to the MnmA/TRMU family.

The protein localises to the cytoplasm. It catalyses the reaction S-sulfanyl-L-cysteinyl-[protein] + uridine(34) in tRNA + AH2 + ATP = 2-thiouridine(34) in tRNA + L-cysteinyl-[protein] + A + AMP + diphosphate + H(+). Catalyzes the 2-thiolation of uridine at the wobble position (U34) of tRNA, leading to the formation of s(2)U34. This is tRNA-specific 2-thiouridylase MnmA from Shewanella sediminis (strain HAW-EB3).